The sequence spans 1325 residues: Cyclic nucleotide-gated channel beta-1 (1325 aa).

Disordered stretches follow at residues 1 to 124 (MLGW…QVAV), 147 to 198 (PQPV…SLWL), 227 to 279 (AVLD…PGDP), 340 to 470 (WEDA…LDSC), 482 to 637 (LERT…SQNS), and 659 to 694 (KEKLIDPDVTSDEESPKPSPAKKAPEPDPAQKPAEA). At 1 to 732 (MLGWVQRVLP…SIDPLTNLMY (732 aa)) the chain is on the cytoplasmic side. Positions 43-81 (PQQEPEPEPEPEPEPEPEPEPEPEPEPEPEPEPVPEEAP) are enriched in acidic residues. Positions 105-121 (LQETQVADPAQPTSQAQ) are enriched in polar residues. The segment covering 370–379 (IPRELTKIQE) has biased composition (basic and acidic residues). 3 stretches are compositionally biased toward acidic residues: residues 380-393 (EREDEQEEDEEEKE), 418-463 (EEKE…EEEP), and 495-517 (LPEEKEEKEEEKEEEKEEEEEKK). The span at 518 to 527 (EEEVEKKEEG) shows a compositional bias: basic and acidic residues. Residues 560–571 (TLPPPERPPPSP) are compositionally biased toward pro residues. The segment at 633-643 (ASQNSAIINDR) is calmodulin-binding CaM1. A helical transmembrane segment spans residues 733-754 (ILWLFFVVLAWNWNCWLIPVRW). Residues 755–763 (AFPYQRADN) are Extracellular-facing. Residues 764-785 (IHFWLLMDYLCDFIYLLDITVF) traverse the membrane as a helical segment. At 786 to 800 (QMRLQFVKGGDIITD) the chain is on the cytoplasmic side. A helical transmembrane segment spans residues 801 to 820 (KKEMRNNYLKSRRFKMDLLC). The Extracellular portion of the chain corresponds to 821–836 (LLPLDFLYLKLGINPL). Residues 837 to 849 (LRLPRCLKYMAFF) form a helical membrane-spanning segment. At 850 to 861 (EFNNRLEAILSK) the chain is on the cytoplasmic side. A helical membrane pass occupies residues 862-884 (AYVYRVIRTTAYLLYSLHLNSCL). Residues 862–961 (AYVYRVIRTT…IGQMRDVVGA (100 aa)) are ion conduction pathway. At 885 to 907 (YYWASAFQGIGSTHWVYDGVGNS) the chain is on the extracellular side. The next 2 membrane-spanning stretches (helical) occupy residues 908–934 (YIRCYYWAVKTLITIGGLPDPQTLFEI) and 935–960 (VFQLLNYFTGVFAFSVMIGQMRDVVG). Over 961–1325 (AATAGQTYYR…VLEEKKEGAE (365 aa)) the chain is Cytoplasmic. Positions 964-1040 (AGQTYYRSCM…SIVSKVALFQ (77 aa)) are C-linker. The tract at residues 1038 to 1142 (LFQGCDRQMI…LDKKDLNEIL (105 aa)) is cNMP-binding domain. The interval 1044–1160 (RQMIFDMLKR…LLRKKARRML (117 aa)) is cyclic nucleotide-binding domain. Residues G1105, E1106, S1108, R1118, and T1119 each contribute to the 3',5'-cyclic GMP site. R1118 is a binding site for 3',5'-cyclic AMP. The segment at 1224–1230 (QQQLLEQ) is calmodulin-binding CaM2. Low complexity predominate over residues 1226–1250 (QLLEQAKSSQEAGGEEGSGATDQPA). The tract at residues 1226–1325 (QLLEQAKSSQ…VLEEKKEGAE (100 aa)) is disordered. Residues 1262-1279 (KPPGPPEPSAQSSPPPAS) are compositionally biased toward pro residues.

It belongs to the cyclic nucleotide-gated cation channel (TC 1.A.1.5) family. CNGB1 subfamily. As to expression, rod outer segments. Olfactory sensory neurons.

The protein resides in the cell projection. It localises to the cilium membrane. It carries out the reaction Ca(2+)(in) = Ca(2+)(out). It catalyses the reaction Na(+)(in) = Na(+)(out). The enzyme catalyses K(+)(in) = K(+)(out). The catalysed reaction is NH4(+)(in) = NH4(+)(out). It carries out the reaction Rb(+)(in) = Rb(+)(out). It catalyses the reaction Li(+)(in) = Li(+)(out). The enzyme catalyses Cs(+)(in) = Cs(+)(out). In terms of biological role, pore-forming subunit of the rod cyclic nucleotide-gated channel. Mediates rod photoresponses at dim light converting transient changes in intracellular cGMP levels into electrical signals. In the dark, cGMP levels are high and keep the channel open enabling a steady inward current carried by Na(+) and Ca(2+) ions that leads to membrane depolarization and neurotransmitter release from synaptic terminals. Upon photon absorption cGMP levels decline leading to channel closure and membrane hyperpolarization that ultimately slows neurotransmitter release and signals the presence of light, the end point of the phototransduction cascade. Pore-forming subunit of the olfactory cyclic nucleotide-gated channel. Operates in the cilia of olfactory sensory neurons where chemical stimulation of the odorant is converted to an electrical signal. Mediates odorant-induced cAMP-dependent Ca(2+) influx triggering neuron depolarization. The rise of intracellular Ca(2+) levels potentiates the olfactory response by activating Ca(2+)-dependent Cl(-) channels, but it also serves as a negative feedback signal to desensitize the channel for rapid adaptation to odorants. Conducts cGMP- and cAMP-gated ion currents, with permeability for monovalent and divalent cations. The selectivity for Ca(2+) over Na(+) increases with cGMP concentrations, whereas the selectivity among monovalent ions is independent of the cGMP levels. This is Cyclic nucleotide-gated channel beta-1 from Mus musculus (Mouse).